We begin with the raw amino-acid sequence, 241 residues long: Ribosome assembly factor mrt4 (241 aa).

The protein belongs to the universal ribosomal protein uL10 family. Associates with the pre-60S ribosomal particle.

It is found in the nucleus. The protein localises to the nucleolus. It localises to the cytoplasm. Functionally, component of the ribosome assembly machinery. Nuclear paralog of the ribosomal protein P0, it binds pre-60S subunits at an early stage of assembly in the nucleolus, and is replaced by P0 in cytoplasmic pre-60S subunits and mature 80S ribosomes. This chain is Ribosome assembly factor mrt4, found in Schizosaccharomyces pombe (strain 972 / ATCC 24843) (Fission yeast).